The primary structure comprises 244 residues: Ribosome-inactivating protein cucurmosin (244 aa).

Catalysis depends on residues Tyr70, Tyr109, Glu158, and Arg161. Residues Asn189 and Asn225 are each glycosylated (N-linked (GlcNAc...) asparagine).

This sequence belongs to the ribosome-inactivating protein family. Type 1 RIP subfamily. In terms of processing, the N-linked glycan consists of GlcNAc2Man3Xyl.

The catalysed reaction is Endohydrolysis of the N-glycosidic bond at one specific adenosine on the 28S rRNA.. In terms of biological role, has cytotoxic activity towards cancer cells, but not normal cells. Inhibits the growth of the human leukemia cell line K562, the murine melanoma cell line B16 and the lung adenocarcinoma cell line A549 with IC(50) values of 88.1 nM, 63.4 nM and 359.3 nM respectively. The chain is Ribosome-inactivating protein cucurmosin from Cucurbita moschata (Winter crookneck squash).